A 229-amino-acid polypeptide reads, in one-letter code: Sodium channel modifier 1 (229 aa).

Ser-2 carries the phosphoserine modification. The Bipartite nuclear localization signal motif lies at 4–20 (KREGDDWSQLNVLKKRR). The Matrin-type zinc-finger motif lies at 42-74 (FACAICPHRPVLDTLAMLTAHRAGKKHLSSLKL). Lys-67 is covalently cross-linked (Glycyl lysine isopeptide (Lys-Gly) (interchain with G-Cter in SUMO2)). Disordered stretches follow at residues 80–105 (QTGKGTEQNPRQQNELKTESKTEAPL) and 128–187 (RRKH…TKRR). The span at 82–92 (GKGTEQNPRQQ) shows a compositional bias: polar residues. Residues 157-171 (ISKEPEPRERSDAKE) show a composition bias toward basic and acidic residues. Residues Ser-182 and Ser-218 each carry the phosphoserine modification. Residues 187 to 229 (RVLNHYLTLRSSGWVPDGRGRWIKDENVEFDSDEEEPPDLPLD) form a required for interaction with LUC7L2 region.

In terms of assembly, component of the minor spliceosome. Within this complex, interacts with RNF113A, as well as with SF3B1/SF3b155, SF3B2/SF3b145, SF3B3/SF3b130 and CDC5L. May interact with LUC7L2 and SNRNP70.

Its subcellular location is the nucleus. It localises to the nucleoplasm. The protein localises to the nucleus speckle. As a component of the minor spliceosome, involved in the splicing of U12-type introns in pre-mRNAs. Plays a role in the regulation of primary cilia length and Hedgehog signaling. The protein is Sodium channel modifier 1 (Scnm1) of Mus musculus (Mouse).